Consider the following 99-residue polypeptide: Integration host factor subunit alpha (99 aa).

It belongs to the bacterial histone-like protein family. As to quaternary structure, heterodimer of an alpha and a beta chain.

In terms of biological role, this protein is one of the two subunits of integration host factor, a specific DNA-binding protein that functions in genetic recombination as well as in transcriptional and translational control. This Alteromonas mediterranea (strain DSM 17117 / CIP 110805 / LMG 28347 / Deep ecotype) protein is Integration host factor subunit alpha.